The following is an 82-amino-acid chain: Myosin light chain alkali (82 aa).

The region spanning 7 to 42 is the EF-hand domain; that stretch reads GCYGDFIECLKLYDKEENGTMMLAELQHALLALGES.

Myosin is a hexamer of 2 heavy chains and 4 light chains.

The polypeptide is Myosin light chain alkali (Mlc1) (Drosophila sechellia (Fruit fly)).